A 356-amino-acid chain; its full sequence is Heat-inducible transcription repressor HrcA (356 aa).

It belongs to the HrcA family.

In terms of biological role, negative regulator of class I heat shock genes (grpE-dnaK-dnaJ and groELS operons). Prevents heat-shock induction of these operons. This is Heat-inducible transcription repressor HrcA from Bartonella tribocorum (strain CIP 105476 / IBS 506).